We begin with the raw amino-acid sequence, 193 residues long: Ribonuclease HII (193 aa).

The region spanning 15-193 (YIVAGIDEAG…PYHRRSFKCC (179 aa)) is the RNase H type-2 domain. Residues Asp-21, Glu-22, and Asp-112 each contribute to the a divalent metal cation site.

The protein belongs to the RNase HII family. It depends on Mn(2+) as a cofactor. The cofactor is Mg(2+).

The protein localises to the cytoplasm. It catalyses the reaction Endonucleolytic cleavage to 5'-phosphomonoester.. Its function is as follows. Endonuclease that specifically degrades the RNA of RNA-DNA hybrids. The sequence is that of Ribonuclease HII from Rickettsia felis (strain ATCC VR-1525 / URRWXCal2) (Rickettsia azadi).